The primary structure comprises 115 residues: Protein V2 (115 aa).

The protein belongs to the geminiviridae protein AV2/V2 family. As to quaternary structure, interacts with host SGS3.

Its subcellular location is the host cytoplasm. The protein localises to the host perinuclear region. In terms of biological role, through its interaction with host SGS3, acts as a suppressor of RNA-mediated gene silencing, also known as post-transcriptional gene silencing (PTGS), a mechanism of plant viral defense that limits the accumulation of viral RNAs. This is Protein V2 from Cynanchum acutum (Little mallow).